A 229-amino-acid polypeptide reads, in one-letter code: uncharacterized protein (229 aa).

Residues 66 to 94 (GHEKLQIQSALRDIESAENQARVQQCNAK) adopt a coiled-coil conformation.

This is an uncharacterized protein from Ostreid herpesvirus 1 (isolate France) (OsHV-1).